The primary structure comprises 392 residues: Formate-dependent phosphoribosylglycinamide formyltransferase (392 aa).

N(1)-(5-phospho-beta-D-ribosyl)glycinamide contacts are provided by residues Glu22–Leu23 and Glu82. Residues Arg114, Lys155, Ser160–Gln165, Glu195–Val198, and Glu203 each bind ATP. Residues Arg119–Leu308 form the ATP-grasp domain. The Mg(2+) site is built by Glu267 and Glu279. Residues Asp286, Lys355, and Arg362–Arg363 contribute to the N(1)-(5-phospho-beta-D-ribosyl)glycinamide site.

The protein belongs to the PurK/PurT family. Homodimer.

It catalyses the reaction N(1)-(5-phospho-beta-D-ribosyl)glycinamide + formate + ATP = N(2)-formyl-N(1)-(5-phospho-beta-D-ribosyl)glycinamide + ADP + phosphate + H(+). It functions in the pathway purine metabolism; IMP biosynthesis via de novo pathway; N(2)-formyl-N(1)-(5-phospho-D-ribosyl)glycinamide from N(1)-(5-phospho-D-ribosyl)glycinamide (formate route): step 1/1. Involved in the de novo purine biosynthesis. Catalyzes the transfer of formate to 5-phospho-ribosyl-glycinamide (GAR), producing 5-phospho-ribosyl-N-formylglycinamide (FGAR). Formate is provided by PurU via hydrolysis of 10-formyl-tetrahydrofolate. The protein is Formate-dependent phosphoribosylglycinamide formyltransferase of Escherichia coli O157:H7.